An 837-amino-acid chain; its full sequence is Mannosyl-oligosaccharide glucosidase (837 aa).

A compositionally biased stretch (basic residues) spans Met1–Ala10. The Cytoplasmic portion of the chain corresponds to Met1 to Arg38. Positions Met1–Ser39 are disordered. Residues Arg3–Arg9 carry the Endoplasmic reticulum targeting motif. Over residues Arg17–Arg33 the composition is skewed to basic and acidic residues. The chain crosses the membrane as a helical; Signal-anchor for type II membrane protein span at residues Ser39–Gly59. Residues Arg60–Tyr837 are Lumenal-facing. The tract at residues Ser76–Cys137 is required for endoplasmic reticulum targeting. Asp583 (proton donor) is an active-site residue. Asn657 carries N-linked (GlcNAc...) asparagine glycosylation. Residue Glu807 is the Proton acceptor of the active site.

This sequence belongs to the glycosyl hydrolase 63 family.

It localises to the endoplasmic reticulum membrane. It catalyses the reaction N(4)-(alpha-D-Glc-(1-&gt;2)-alpha-D-Glc-(1-&gt;3)-alpha-D-Glc-(1-&gt;3)-alpha-D-Man-(1-&gt;2)-alpha-D-Man-(1-&gt;2)-alpha-D-Man-(1-&gt;3)-[alpha-D-Man-(1-&gt;2)-alpha-D-Man-(1-&gt;3)-[alpha-D-Man-(1-&gt;2)-alpha-D-Man-(1-&gt;6)]-alpha-D-Man-(1-&gt;6)]-beta-D-Man-(1-&gt;4)-beta-D-GlcNAc-(1-&gt;4)-beta-D-GlcNAc)-L-asparaginyl-[protein] + H2O = N(4)-(alpha-D-Glc-(1-&gt;3)-alpha-D-Glc-(1-&gt;3)-alpha-D-Man-(1-&gt;2)-alpha-D-Man-(1-&gt;2)-alpha-D-Man-(1-&gt;3)-[alpha-D-Man-(1-&gt;2)-alpha-D-Man-(1-&gt;3)-[alpha-D-Man-(1-&gt;2)-alpha-D-Man-(1-&gt;6)]-alpha-D-Man-(1-&gt;6)]-beta-D-Man-(1-&gt;4)-beta-D-GlcNAc-(1-&gt;4)-beta-D-GlcNAc)-L-asparaginyl-[protein] + beta-D-glucose. Its pathway is glycan metabolism; N-glycan degradation. Its activity is regulated as follows. Inhibited by 1-deoxynojirimycin (40% inhibition) and N,N-dimethyl-deoxynojirimycin (85% inhibition). Functionally, in the context of N-glycan degradation, cleaves the distal alpha 1,2-linked glucose residue from the Glc(3)Man(9)GlcNAc(2) oligosaccharide precursor in a highly specific manner. The chain is Mannosyl-oligosaccharide glucosidase from Homo sapiens (Human).